A 190-amino-acid chain; its full sequence is Holliday junction branch migration complex subunit RuvA (190 aa).

Residues 1–63 (MIRKINATIE…EWNTSLYIFK (63 aa)) are domain I. Positions 64-138 (DKIERDVFES…NSFSAYSTGA (75 aa)) are domain II. The segment at 138-142 (ADTQS) is flexible linker. The domain III stretch occupies residues 143-190 (YGNNNLKEAIEALETLGFQRYEIMKVIGQLDLEDLKTEEIIKECLTRL).

This sequence belongs to the RuvA family. Homotetramer. Forms an RuvA(8)-RuvB(12)-Holliday junction (HJ) complex. HJ DNA is sandwiched between 2 RuvA tetramers; dsDNA enters through RuvA and exits via RuvB. An RuvB hexamer assembles on each DNA strand where it exits the tetramer. Each RuvB hexamer is contacted by two RuvA subunits (via domain III) on 2 adjacent RuvB subunits; this complex drives branch migration. In the full resolvosome a probable DNA-RuvA(4)-RuvB(12)-RuvC(2) complex forms which resolves the HJ.

Its subcellular location is the cytoplasm. In terms of biological role, the RuvA-RuvB-RuvC complex processes Holliday junction (HJ) DNA during genetic recombination and DNA repair, while the RuvA-RuvB complex plays an important role in the rescue of blocked DNA replication forks via replication fork reversal (RFR). RuvA specifically binds to HJ cruciform DNA, conferring on it an open structure. The RuvB hexamer acts as an ATP-dependent pump, pulling dsDNA into and through the RuvAB complex. HJ branch migration allows RuvC to scan DNA until it finds its consensus sequence, where it cleaves and resolves the cruciform DNA. This is Holliday junction branch migration complex subunit RuvA from Petrotoga mobilis (strain DSM 10674 / SJ95).